We begin with the raw amino-acid sequence, 471 residues long: Glutamate--tRNA ligase (471 aa).

Positions 9-19 match the 'HIGH' region motif; sequence PSPTGYLHVGG. 4 residues coordinate Zn(2+): Cys98, Cys100, Cys125, and His127. The 'KMSKS' region motif lies at 237–241; sequence KLSKR. Position 240 (Lys240) interacts with ATP.

The protein belongs to the class-I aminoacyl-tRNA synthetase family. Glutamate--tRNA ligase type 1 subfamily. As to quaternary structure, monomer. Requires Zn(2+) as cofactor.

The protein resides in the cytoplasm. The enzyme catalyses tRNA(Glu) + L-glutamate + ATP = L-glutamyl-tRNA(Glu) + AMP + diphosphate. In terms of biological role, catalyzes the attachment of glutamate to tRNA(Glu) in a two-step reaction: glutamate is first activated by ATP to form Glu-AMP and then transferred to the acceptor end of tRNA(Glu). The polypeptide is Glutamate--tRNA ligase (Escherichia coli O6:K15:H31 (strain 536 / UPEC)).